The sequence spans 230 residues: Uracil-DNA glycosylase (230 aa).

Residue aspartate 70 is the Proton acceptor of the active site.

It belongs to the uracil-DNA glycosylase (UDG) superfamily. UNG family.

It is found in the cytoplasm. It catalyses the reaction Hydrolyzes single-stranded DNA or mismatched double-stranded DNA and polynucleotides, releasing free uracil.. Excises uracil residues from the DNA which can arise as a result of misincorporation of dUMP residues by DNA polymerase or due to deamination of cytosine. The chain is Uracil-DNA glycosylase from Campylobacter concisus (strain 13826).